Consider the following 500-residue polypeptide: Maturase K (500 aa).

It belongs to the intron maturase 2 family. MatK subfamily.

The protein localises to the plastid. The protein resides in the chloroplast. Functionally, usually encoded in the trnK tRNA gene intron. Probably assists in splicing its own and other chloroplast group II introns. In Brasenia schreberi (Water shield), this protein is Maturase K.